We begin with the raw amino-acid sequence, 121 residues long: UPF0344 protein BC_1150 (121 aa).

Transmembrane regions (helical) follow at residues 6–26, 38–58, 65–85, and 92–112; these read ITAW…YSAG, LMYI…VKTA, WYGL…MVLV, and PTGA…YLGL.

This sequence belongs to the UPF0344 family.

It localises to the cell membrane. The chain is UPF0344 protein BC_1150 from Bacillus cereus (strain ATCC 14579 / DSM 31 / CCUG 7414 / JCM 2152 / NBRC 15305 / NCIMB 9373 / NCTC 2599 / NRRL B-3711).